The chain runs to 491 residues: Hydroxymethylglutaryl-CoA synthase (491 aa).

Glutamate 127 serves as the catalytic Proton donor/acceptor. Cysteine 159 functions as the Acyl-thioester intermediate in the catalytic mechanism. (3S)-3-hydroxy-3-methylglutaryl-CoA contacts are provided by cysteine 159, threonine 201, and serine 250. Residue serine 276 is modified to Phosphoserine. Histidine 296 acts as the Proton donor/acceptor in catalysis. (3S)-3-hydroxy-3-methylglutaryl-CoA is bound by residues histidine 296, lysine 305, asparagine 371, and serine 405.

The protein belongs to the thiolase-like superfamily. HMG-CoA synthase family.

The catalysed reaction is acetoacetyl-CoA + acetyl-CoA + H2O = (3S)-3-hydroxy-3-methylglutaryl-CoA + CoA + H(+). The protein operates within metabolic intermediate biosynthesis; (R)-mevalonate biosynthesis; (R)-mevalonate from acetyl-CoA: step 2/3. In terms of biological role, hydroxymethylglutaryl-CoA synthase; part of the first module of ergosterol biosynthesis pathway that includes the early steps of the pathway, conserved across all eukaryotes, and which results in the formation of mevalonate from acetyl-coenzyme A (acetyl-CoA). ERG13 condenses acetyl-CoA with acetoacetyl-CoA to form hydroxymethylglutaryl-CoA (HMG-CoA). The first module starts with the action of the cytosolic acetyl-CoA acetyltransferase ERG10 that catalyzes the formation of acetoacetyl-CoA. The hydroxymethylglutaryl-CoA synthase ERG13 then condenses acetyl-CoA with acetoacetyl-CoA to form HMG-CoA. The rate-limiting step of the early module is the reduction to mevalonate by the 3-hydroxy-3-methylglutaryl-coenzyme A (HMG-CoA) reductases HMG1 and HMG2 which are derived from a single ancestral HMGR gene by gene duplication. This chain is Hydroxymethylglutaryl-CoA synthase, found in Saccharomyces cerevisiae (strain ATCC 204508 / S288c) (Baker's yeast).